The chain runs to 609 residues: Cationic amino acid transporter 3, mitochondrial (609 aa).

The N-terminal 14 residues, 1 to 14 (MGCLRSLVRRKQFD), are a transit peptide targeting the mitochondrion. 14 helical membrane passes run 38-58 (LIAI…VGTV), 66-86 (ALAL…FCYA), 104-124 (ICIG…EYTI), 161-181 (IVVD…CCLG), 190-210 (GIVT…GSYL), 226-246 (FPYG…AYIG), 270-290 (ISLL…VGLV), 314-334 (AYLI…GSIL), 361-381 (QVPI…AFFM), 388-408 (GMVS…LLIV), 474-494 (IMFT…FLLP), 499-519 (YSLC…LICI), 534-554 (FICP…MYLL), and 558-578 (GAAT…VYIF).

Belongs to the amino acid-polyamine-organocation (APC) superfamily. Cationic amino acid transporter (CAT) (TC 2.A.3.3) family. As to expression, expressed in roots, stems, flowers, and leaves.

The protein localises to the mitochondrion membrane. Its function is as follows. Permease involved in the transport of the cationic neutral or acidic amino acids. The sequence is that of Cationic amino acid transporter 3, mitochondrial (CAT3) from Arabidopsis thaliana (Mouse-ear cress).